The sequence spans 105 residues: Early E3A 12.1 kDa protein (105 aa).

This sequence belongs to the adenoviridae E3A-2 family.

In terms of biological role, not yet known. The polypeptide is Early E3A 12.1 kDa protein (Human adenovirus A serotype 12 (HAdV-12)).